The following is a 348-amino-acid chain: Histidinol-phosphate aminotransferase (348 aa).

The residue at position 211 (Lys211) is an N6-(pyridoxal phosphate)lysine.

Belongs to the class-II pyridoxal-phosphate-dependent aminotransferase family. Histidinol-phosphate aminotransferase subfamily. In terms of assembly, homodimer. Pyridoxal 5'-phosphate is required as a cofactor.

It carries out the reaction L-histidinol phosphate + 2-oxoglutarate = 3-(imidazol-4-yl)-2-oxopropyl phosphate + L-glutamate. The protein operates within amino-acid biosynthesis; L-histidine biosynthesis; L-histidine from 5-phospho-alpha-D-ribose 1-diphosphate: step 7/9. This is Histidinol-phosphate aminotransferase from Chlorobaculum tepidum (strain ATCC 49652 / DSM 12025 / NBRC 103806 / TLS) (Chlorobium tepidum).